The sequence spans 369 residues: Protein arginine N-methyltransferase 1-A (369 aa).

Residues 48 to 369 (KDYYFDSYAH…LSCSTDYRMR (322 aa)) form the SAM-dependent MTase PRMT-type domain. S-adenosyl-L-methionine is bound by residues H61, R70, G94, E116, and E145. Catalysis depends on residues E160 and E169.

This sequence belongs to the class I-like SAM-binding methyltransferase superfamily. Protein arginine N-methyltransferase family. Homodimer. Homooctamer; individual homodimers associates to form a homooctamer and homooligomerization is required for proper localization to the cell membrane. Individual homodimers can associate to form a homohexamer. Component of a complex with lsm14a/rap55a. Interacts with cirbp.

The protein localises to the nucleus. The protein resides in the nucleoplasm. It localises to the cytoplasm. It is found in the cytosol. It carries out the reaction L-arginyl-[protein] + 2 S-adenosyl-L-methionine = N(omega),N(omega)-dimethyl-L-arginyl-[protein] + 2 S-adenosyl-L-homocysteine + 2 H(+). The catalysed reaction is L-arginyl-[protein] + S-adenosyl-L-methionine = N(omega)-methyl-L-arginyl-[protein] + S-adenosyl-L-homocysteine + H(+). The enzyme catalyses N(omega)-methyl-L-arginyl-[protein] + S-adenosyl-L-methionine = N(omega),N(omega)-dimethyl-L-arginyl-[protein] + S-adenosyl-L-homocysteine + H(+). In terms of biological role, arginine methyltransferase that methylates (mono and asymmetric dimethylation) the guanidino nitrogens of arginyl residues present in target proteins. Constitutes the main enzyme that mediates monomethylation and asymmetric dimethylation of histone H4 'Arg-4' (H4R3me1 and H4R3me2a, respectively), a specific tag for epigenetic transcriptional activation. Methylates cirbp to regulate its subcellular location. Acts transiently during metamorphosis as a transcription coactivator, enhancing thyroid hormone (T3) receptor (TR)-mediated transcription by enhancing TR binding to the T3 response element (TRE), and histone modification through recruitment of other coactivators. This Xenopus laevis (African clawed frog) protein is Protein arginine N-methyltransferase 1-A (prmt1-a).